The primary structure comprises 115 residues: Large ribosomal subunit protein bL19 (115 aa).

It belongs to the bacterial ribosomal protein bL19 family.

In terms of biological role, this protein is located at the 30S-50S ribosomal subunit interface and may play a role in the structure and function of the aminoacyl-tRNA binding site. This chain is Large ribosomal subunit protein bL19, found in Leifsonia xyli subsp. xyli (strain CTCB07).